A 216-amino-acid chain; its full sequence is Somatotropin (216 aa).

The N-terminal stretch at 1-26 (MATGSQTSWLLTFTLLCLPWPQEAGA) is a signal peptide. Residue His-45 coordinates Zn(2+). Residues Cys-78 and Cys-189 are joined by a disulfide bond. Ser-131 is subject to Phosphoserine. Glu-198 is a Zn(2+) binding site. Cys-206 and Cys-214 are oxidised to a cystine.

This sequence belongs to the somatotropin/prolactin family.

The protein localises to the secreted. In terms of biological role, plays an important role in growth control. Its major role in stimulating body growth is to stimulate the liver and other tissues to secrete IGF1. It stimulates both the differentiation and proliferation of myoblasts. It also stimulates amino acid uptake and protein synthesis in muscle and other tissues. This is Somatotropin (GH1) from Spalax ehrenbergi (Middle East blind mole rat).